Here is a 300-residue protein sequence, read N- to C-terminus: Bifunctional protein FolD 2 (300 aa).

Residues 165–167 (GRS), Ser190, and Ile231 each bind NADP(+).

It belongs to the tetrahydrofolate dehydrogenase/cyclohydrolase family. As to quaternary structure, homodimer.

The enzyme catalyses (6R)-5,10-methylene-5,6,7,8-tetrahydrofolate + NADP(+) = (6R)-5,10-methenyltetrahydrofolate + NADPH. It catalyses the reaction (6R)-5,10-methenyltetrahydrofolate + H2O = (6R)-10-formyltetrahydrofolate + H(+). It functions in the pathway one-carbon metabolism; tetrahydrofolate interconversion. Catalyzes the oxidation of 5,10-methylenetetrahydrofolate to 5,10-methenyltetrahydrofolate and then the hydrolysis of 5,10-methenyltetrahydrofolate to 10-formyltetrahydrofolate. The polypeptide is Bifunctional protein FolD 2 (Pseudomonas syringae pv. syringae (strain B728a)).